We begin with the raw amino-acid sequence, 144 residues long: Large ribosomal subunit protein uL15 (144 aa).

The segment at 1–52 is disordered; sequence MRLNTLSPANGARHSRKRLGRGIGSGFGKTSGRGHKGQKSRSGSSIRRGFEG. The segment covering 21–31 has biased composition (gly residues); the sequence is RGIGSGFGKTS.

It belongs to the universal ribosomal protein uL15 family. As to quaternary structure, part of the 50S ribosomal subunit.

Functionally, binds to the 23S rRNA. The polypeptide is Large ribosomal subunit protein uL15 (Buchnera aphidicola subsp. Acyrthosiphon pisum (strain 5A)).